A 505-amino-acid chain; its full sequence is Probable folylpolyglutamate synthase (505 aa).

G89 to S92 contacts ATP. Mg(2+) is bound by residues S121, E190, and H218. ATP-binding residues include R332 and D346.

Belongs to the folylpolyglutamate synthase family. A monovalent cation is required as a cofactor.

The protein resides in the mitochondrion inner membrane. It localises to the mitochondrion matrix. It is found in the cytoplasm. It carries out the reaction (6S)-5,6,7,8-tetrahydrofolyl-(gamma-L-Glu)(n) + L-glutamate + ATP = (6S)-5,6,7,8-tetrahydrofolyl-(gamma-L-Glu)(n+1) + ADP + phosphate + H(+). It participates in cofactor biosynthesis; tetrahydrofolylpolyglutamate biosynthesis. Functionally, catalyzes conversion of folates to polyglutamate derivatives allowing concentration of folate compounds in the cell and the intracellular retention of these cofactors, which are important substrates for most of the folate-dependent enzymes that are involved in one-carbon transfer reactions involved in purine, pyrimidine and amino acid synthesis. This is Probable folylpolyglutamate synthase (met7) from Schizosaccharomyces pombe (strain 972 / ATCC 24843) (Fission yeast).